The following is a 226-amino-acid chain: Ribonuclease 3 (226 aa).

The RNase III domain occupies 6–128 (INRLQRKLGY…LIGGIFLDSD (123 aa)). Mg(2+) is bound at residue Glu41. Residue Asp45 is part of the active site. Mg(2+)-binding residues include Asp114 and Glu117. Residue Glu117 is part of the active site. In terms of domain architecture, DRBM spans 155-225 (DPKTRLQEFL…AEQALKKLEL (71 aa)).

The protein belongs to the ribonuclease III family. In terms of assembly, homodimer. It depends on Mg(2+) as a cofactor.

It is found in the cytoplasm. It carries out the reaction Endonucleolytic cleavage to 5'-phosphomonoester.. In terms of biological role, digests double-stranded RNA. Involved in the processing of primary rRNA transcript to yield the immediate precursors to the large and small rRNAs (23S and 16S). Processes some mRNAs, and tRNAs when they are encoded in the rRNA operon. Processes pre-crRNA and tracrRNA of type II CRISPR loci if present in the organism. This Pectobacterium carotovorum subsp. carotovorum (strain PC1) protein is Ribonuclease 3.